Consider the following 1382-residue polypeptide: DNA-directed RNA polymerase subunit beta'' (1382 aa).

The Zn(2+) site is built by Cys224, Cys294, Cys301, and Cys304.

This sequence belongs to the RNA polymerase beta' chain family. RpoC2 subfamily. As to quaternary structure, in plastids the minimal PEP RNA polymerase catalytic core is composed of four subunits: alpha, beta, beta', and beta''. When a (nuclear-encoded) sigma factor is associated with the core the holoenzyme is formed, which can initiate transcription. Zn(2+) is required as a cofactor.

It localises to the plastid. Its subcellular location is the chloroplast. The enzyme catalyses RNA(n) + a ribonucleoside 5'-triphosphate = RNA(n+1) + diphosphate. Its function is as follows. DNA-dependent RNA polymerase catalyzes the transcription of DNA into RNA using the four ribonucleoside triphosphates as substrates. This chain is DNA-directed RNA polymerase subunit beta'', found in Dioscorea elephantipes (Elephant's foot yam).